The following is a 4481-amino-acid chain: Dynein axonemal heavy chain 17 (4481 aa).

The tract at residues 1–1792 (MPDLRIDYLE…FANICDAQIK (1792 aa)) is stem. The stretch at 521–569 (LLYMCGGLLERPLILVEVVPRYSVMLEMFNTELDNAKLMYDAQMAASAD) is one Kelch 1 repeat. A coiled-coil region spans residues 759–826 (ENVMEYIQEM…GRVANLNKRY (68 aa)). TPR repeat units follow at residues 1533 to 1566 (VVEA…YLET) and 1688 to 1722 (IWWT…QLNA). AAA regions lie at residues 1793–2014 (YSYE…VLVV), 2074–2295 (KIIK…IGFK), 2401–2649 (ELDP…IFQG), and 2747–2996 (SYNE…ERRY). ATP is bound by residues 1831–1838 (GPAGTGKT) and 2112–2119 (GNAGSGKS). One copy of the Kelch 2 repeat lies at 2229 to 2275 (ISHLRTATPATVSRAGILYINPADLGWNPVVSSWIERRKVQSEKANL). Residues 2439 to 2446 (GNAGTGKS) and 2785 to 2792 (GVGGSGKQ) each bind ATP. A Kelch 3 repeat occupies 2782-2834 (LLVGVGGSGKQSLSRLAAYISALDVFQITLKKGYAIPDLKMDLATQYIKSAVK). Coiled-coil stretches lie at residues 3011 to 3071 (YQNL…IQVV) and 3241 to 3293 (DVAP…EKIK). Residues 3011–3297 (YQNLLAKKRM…TAEKIKCQQE (287 aa)) are stalk. AAA regions lie at residues 3389–3616 (LTDD…EIEE) and 3826–4059 (VKNF…VLYN). A TPR 3 repeat occupies 4138-4173 (PESPYLYGLHPNAEIGFLTVTSEKLFRTVLEMQPKE). Kelch repeat units follow at residues 4272-4321 (NLGL…DLLQ) and 4339-4385 (VWLA…DMTA).

This sequence belongs to the dynein heavy chain family. Consists of at least two heavy chains and a number of intermediate and light chains.

It localises to the cytoplasm. It is found in the cytoskeleton. Its subcellular location is the flagellum axoneme. Its function is as follows. Force generating protein component of the outer dynein arms (ODAs) in the sperm flagellum. Produces force towards the minus ends of microtubules. Dynein has ATPase activity; the force-producing power stroke is thought to occur on release of ADP. Plays a major role in sperm motility, implicated in sperm flagellar assembly and beating. The chain is Dynein axonemal heavy chain 17 from Mus musculus (Mouse).